Consider the following 169-residue polypeptide: MPLLDSFTVDHTRMQAPAVRIAKTMKTPKGDVITVFDLRFCVPNKEILSERGIHTLEHLYAGFMRDHLNGDSVEIIDISPMGCRTGFYMSLIGTPAEADVAQAWLASMNDVLKVAEQAQIPELNEYQCGTFDMHSLDQAQSIARSIIAAGITVNKNDELKLSDEILNGL.

Residues His54, His58, and Cys128 each contribute to the Fe cation site.

This sequence belongs to the LuxS family. Homodimer. The cofactor is Fe cation.

The enzyme catalyses S-(5-deoxy-D-ribos-5-yl)-L-homocysteine = (S)-4,5-dihydroxypentane-2,3-dione + L-homocysteine. Its function is as follows. Involved in the synthesis of autoinducer 2 (AI-2) which is secreted by bacteria and is used to communicate both the cell density and the metabolic potential of the environment. The regulation of gene expression in response to changes in cell density is called quorum sensing. Catalyzes the transformation of S-ribosylhomocysteine (RHC) to homocysteine (HC) and 4,5-dihydroxy-2,3-pentadione (DPD). The sequence is that of S-ribosylhomocysteine lyase from Shewanella sediminis (strain HAW-EB3).